A 626-amino-acid polypeptide reads, in one-letter code: Basic helix-loop-helix ARNT-like protein 1 (626 aa).

A disordered region spans residues 1 to 58 (MADQRMDISSTISDFMSPGPTDLLSGSLSTSGVDCNRKRKGSATDYQESMDTDKDDPH). Serine 17 is subject to Phosphoserine; by GSK3-beta. The segment covering 17-32 (SPGPTDLLSGSLSTSG) has biased composition (low complexity). Residue threonine 21 is modified to Phosphothreonine; by GSK3-beta. Positions 36–41 (NRKRKG) match the Nuclear localization signal motif. A bHLH domain is found at 72-125 (NAREAHSQIEKRRRDKMNSFIDELASLVPTCNAMSRKLDKLTVLRMAVQHMKTL). A Phosphoserine modification is found at serine 78. A Phosphoserine; by CK2 modification is found at serine 90. Positions 142-152 (LSDDELKHLIL) match the Nuclear export signal 1 motif. The PAS 1 domain occupies 143-215 (SDDELKHLIL…EQLSSSDTAP (73 aa)). Lysine 252 is covalently cross-linked (Glycyl lysine isopeptide (Lys-Gly) (interchain with G-Cter in SUMO2 and SUMO3)). Lysine 259 participates in a covalent cross-link: Glycyl lysine isopeptide (Lys-Gly) (interchain with G-Cter in SUMO); alternate. Residue lysine 259 forms a Glycyl lysine isopeptide (Lys-Gly) (interchain with G-Cter in SUMO2); alternate linkage. The region spanning 326–396 (PQPVNGEIRV…ECHRQVLQTR (71 aa)) is the PAS 2 domain. Positions 361–369 (LAYLPQELL) match the Nuclear export signal 2 motif. One can recognise a PAC domain in the interval 401 to 444 (TNCYKFKIKDGSFITLRSRWFSFMNPWTKEVEYIVSTNTVVLAN). 2 disordered regions span residues 459–492 (SPHS…RAGA) and 511–595 (GSSP…SPSN). The segment at 508-588 (RIRGSSPSSC…IGIDMIDNDQ (81 aa)) is interaction with CIART. Low complexity predominate over residues 511–521 (GSSPSSCGSSP). Lysine 538 carries the post-translational modification N6-acetyllysine.

Component of the circadian clock oscillator which includes the CRY1/2 proteins, CLOCK or NPAS2, BMAL1 or BMAL2, CSNK1D and/or CSNK1E, TIMELESS and the PER1/2/3 proteins. Forms a heterodimer with CLOCK. The CLOCK-BMAL1 heterodimer is required for E-box-dependent transactivation, for CLOCK nuclear translocation and degradation, and, for phosphorylation of both CLOCK and BMAL1. Part of a nuclear complex which also includes RACK1 and PRKCA; RACK1 and PRKCA are recruited to the complex in a circadian manner. Interacts with NPAS2. Interacts with EZH2. Interacts with SUMO3. Interacts with SIRT1. Interacts with AHR. Interacts with ID1, ID2 and ID3. Interacts with DDX4. Interacts with OGT. Interacts with EED and SUZ12. Interacts with MTA1. Interacts with CIART. Interacts with HSP90. Interacts with KAT2B and EP300. Interacts with BHLHE40/DEC1 and BHLHE41/DEC2. Interacts with RELB and the interaction is enhanced in the presence of CLOCK. Interacts with PER1, PER2, CRY1 and CRY2 and this interaction requires a translocation to the nucleus. Interaction of the CLOCK-BMAL1 heterodimer with PER or CRY inhibits transcription activation. Interaction of the CLOCK-BMAL1 with CRY1 is independent of DNA but with PER2 is off DNA. The CLOCK-BMAL1 heterodimer interacts with GSK3B. Interacts with KDM5A. Interacts with KMT2A; in a circadian manner. Interacts with UBE3A. Interacts with PRKCG. Interacts with MAGEL2. Interacts with NCOA2. Interacts with THRAP3. The CLOCK-BMAL1 heterodimer interacts with PASD1. Interacts with PASD1. Interacts with USP9X. Interacts with PIWIL2 (via PIWI domain). Interacts with HDAC3. Interacts with HNF4A. Ubiquitinated, leading to its proteasomal degradation. Deubiquitinated by USP9X. Post-translationally, O-glycosylated; contains O-GlcNAc. O-glycosylation by OGT prevents protein degradation by inhibiting ubiquitination. It also stabilizes the CLOCK-BMAL1 heterodimer thereby increasing CLOCK-BMAL1-mediated transcription of genes in the negative loop of the circadian clock such as PER1/2/3 and CRY1/2. In terms of processing, acetylated on Lys-538 by CLOCK during the repression phase of the circadian cycle. Acetylation facilitates recruitment of CRY1 protein and initiates the repression phase of the circadian cycle. Acetylated at Lys-538 by KAT5 during the activation phase of the cycle, leading to recruitment of the positive transcription elongation factor b (P-TEFb) and BRD4, followed by productive elongation of circadian transcripts. Deacetylated by SIRT1, which may result in decreased protein stability. Phosphorylated upon dimerization with CLOCK. Phosphorylation enhances the transcriptional activity, alters the subcellular localization and decreases the stability of the CLOCK-BMAL1 heterodimer by promoting its degradation. Phosphorylation shows circadian variations in the liver with a peak between CT10 to CT14. Phosphorylation at Ser-90 by CK2 is essential for its nuclear localization, its interaction with CLOCK and controls CLOCK nuclear entry. Dephosphorylation at Ser-78 is important for dimerization with CLOCK and transcriptional activity. Post-translationally, sumoylated on Lys-259 upon dimerization with CLOCK. Predominantly conjugated to poly-SUMO2/3 rather than SUMO1 and the level of these conjugates undergo rhythmic variation, peaking at CT9-CT12. Sumoylation localizes it exclusively to the PML body and promotes its ubiquitination in the PML body, ubiquitin-dependent proteasomal degradation and the transcriptional activity of the CLOCK-BMAL1 heterodimer. In terms of processing, undergoes lysosome-mediated degradation in a time-dependent manner in the liver.

The protein resides in the nucleus. It localises to the cytoplasm. It is found in the PML body. Functionally, transcriptional activator which forms a core component of the circadian clock. The circadian clock, an internal time-keeping system, regulates various physiological processes through the generation of approximately 24 hour circadian rhythms in gene expression, which are translated into rhythms in metabolism and behavior. It is derived from the Latin roots 'circa' (about) and 'diem' (day) and acts as an important regulator of a wide array of physiological functions including metabolism, sleep, body temperature, blood pressure, endocrine, immune, cardiovascular, and renal function. Consists of two major components: the central clock, residing in the suprachiasmatic nucleus (SCN) of the brain, and the peripheral clocks that are present in nearly every tissue and organ system. Both the central and peripheral clocks can be reset by environmental cues, also known as Zeitgebers (German for 'timegivers'). The predominant Zeitgeber for the central clock is light, which is sensed by retina and signals directly to the SCN. The central clock entrains the peripheral clocks through neuronal and hormonal signals, body temperature and feeding-related cues, aligning all clocks with the external light/dark cycle. Circadian rhythms allow an organism to achieve temporal homeostasis with its environment at the molecular level by regulating gene expression to create a peak of protein expression once every 24 hours to control when a particular physiological process is most active with respect to the solar day. Transcription and translation of core clock components (CLOCK, NPAS2, BMAL1, BMAL2, PER1, PER2, PER3, CRY1 and CRY2) plays a critical role in rhythm generation, whereas delays imposed by post-translational modifications (PTMs) are important for determining the period (tau) of the rhythms (tau refers to the period of a rhythm and is the length, in time, of one complete cycle). A diurnal rhythm is synchronized with the day/night cycle, while the ultradian and infradian rhythms have a period shorter and longer than 24 hours, respectively. Disruptions in the circadian rhythms contribute to the pathology of cardiovascular diseases, cancer, metabolic syndromes and aging. A transcription/translation feedback loop (TTFL) forms the core of the molecular circadian clock mechanism. Transcription factors, CLOCK or NPAS2 and BMAL1 or BMAL2, form the positive limb of the feedback loop, act in the form of a heterodimer and activate the transcription of core clock genes and clock-controlled genes (involved in key metabolic processes), harboring E-box elements (5'-CACGTG-3') within their promoters. The core clock genes: PER1/2/3 and CRY1/2 which are transcriptional repressors form the negative limb of the feedback loop and interact with the CLOCK|NPAS2-BMAL1|BMAL2 heterodimer inhibiting its activity and thereby negatively regulating their own expression. This heterodimer also activates nuclear receptors NR1D1/2 and RORA/B/G, which form a second feedback loop and which activate and repress BMAL1 transcription, respectively. BMAL1 positively regulates myogenesis and negatively regulates adipogenesis via the transcriptional control of the genes of the canonical Wnt signaling pathway. Plays a role in normal pancreatic beta-cell function; regulates glucose-stimulated insulin secretion via the regulation of antioxidant genes NFE2L2/NRF2 and its targets SESN2, PRDX3, CCLC and CCLM. Negatively regulates the mTORC1 signaling pathway; regulates the expression of MTOR and DEPTOR. Controls diurnal oscillations of Ly6C inflammatory monocytes; rhythmic recruitment of the PRC2 complex imparts diurnal variation to chemokine expression that is necessary to sustain Ly6C monocyte rhythms. Regulates the expression of HSD3B2, STAR, PTGS2, CYP11A1, CYP19A1 and LHCGR in the ovary and also the genes involved in hair growth. Plays an important role in adult hippocampal neurogenesis by regulating the timely entry of neural stem/progenitor cells (NSPCs) into the cell cycle and the number of cell divisions that take place prior to cell-cycle exit. Regulates the circadian expression of CIART and KLF11. The CLOCK-BMAL1 heterodimer regulates the circadian expression of SERPINE1/PAI1, VWF, B3, CCRN4L/NOC, NAMPT, DBP, MYOD1, PPARGC1A, PPARGC1B, SIRT1, GYS2, F7, NGFR, GNRHR, BHLHE40/DEC1, ATF4, MTA1, KLF10 and also genes implicated in glucose and lipid metabolism. Promotes rhythmic chromatin opening, regulating the DNA accessibility of other transcription factors. May play a role in spermatogenesis; contributes to the chromatoid body assembly and physiology. The NPAS2-BMAL1 heterodimer positively regulates the expression of MAOA, F7 and LDHA and modulates the circadian rhythm of daytime contrast sensitivity by regulating the rhythmic expression of adenylate cyclase type 1 (ADCY1) in the retina. The preferred binding motif for the CLOCK-BMAL1 heterodimer is 5'-CACGTGA-3', which contains a flanking adenine nucleotide at the 3-prime end of the canonical 6-nucleotide E-box sequence. CLOCK specifically binds to the half-site 5'-CAC-3', while BMAL1 binds to the half-site 5'-GTGA-3'. The CLOCK-BMAL1 heterodimer also recognizes the non-canonical E-box motifs 5'-AACGTGA-3' and 5'-CATGTGA-3'. Essential for the rhythmic interaction of CLOCK with ASS1 and plays a critical role in positively regulating CLOCK-mediated acetylation of ASS1. Plays a role in protecting against lethal sepsis by limiting the expression of immune checkpoint protein CD274 in macrophages in a PKM2-dependent manner. Regulates the diurnal rhythms of skeletal muscle metabolism via transcriptional activation of genes promoting triglyceride synthesis (DGAT2) and metabolic efficiency (COQ10B). The chain is Basic helix-loop-helix ARNT-like protein 1 from Rattus norvegicus (Rat).